A 338-amino-acid chain; its full sequence is Pyridoxal 5'-phosphate synthase subunit PdxS (338 aa).

D66 provides a ligand contact to D-ribose 5-phosphate. K123 acts as the Schiff-base intermediate with D-ribose 5-phosphate in catalysis. Residue G195 coordinates D-ribose 5-phosphate. K207 serves as a coordination point for D-glyceraldehyde 3-phosphate. D-ribose 5-phosphate contacts are provided by residues G256 and 277-278; that span reads GS.

This sequence belongs to the PdxS/SNZ family. In the presence of PdxT, forms a dodecamer of heterodimers.

It carries out the reaction aldehydo-D-ribose 5-phosphate + D-glyceraldehyde 3-phosphate + L-glutamine = pyridoxal 5'-phosphate + L-glutamate + phosphate + 3 H2O + H(+). Its pathway is cofactor biosynthesis; pyridoxal 5'-phosphate biosynthesis. Its function is as follows. Catalyzes the formation of pyridoxal 5'-phosphate from ribose 5-phosphate (RBP), glyceraldehyde 3-phosphate (G3P) and ammonia. The ammonia is provided by the PdxT subunit. Can also use ribulose 5-phosphate and dihydroxyacetone phosphate as substrates, resulting from enzyme-catalyzed isomerization of RBP and G3P, respectively. The sequence is that of Pyridoxal 5'-phosphate synthase subunit PdxS from Saccharolobus islandicus (strain Y.N.15.51 / Yellowstone #2) (Sulfolobus islandicus).